The primary structure comprises 541 residues: Chaperonin GroEL (541 aa).

ATP-binding positions include 29–32 (TLGP), 86–90 (DGTTT), glycine 413, 476–478 (NAA), and aspartate 492.

This sequence belongs to the chaperonin (HSP60) family. In terms of assembly, forms a cylinder of 14 subunits composed of two heptameric rings stacked back-to-back. Interacts with the co-chaperonin GroES.

The protein localises to the cytoplasm. It carries out the reaction ATP + H2O + a folded polypeptide = ADP + phosphate + an unfolded polypeptide.. Together with its co-chaperonin GroES, plays an essential role in assisting protein folding. The GroEL-GroES system forms a nano-cage that allows encapsulation of the non-native substrate proteins and provides a physical environment optimized to promote and accelerate protein folding. The chain is Chaperonin GroEL from Enterococcus faecalis (strain ATCC 700802 / V583).